A 151-amino-acid polypeptide reads, in one-letter code: 3-dehydroquinate dehydratase (151 aa).

Residue Y26 is the Proton acceptor of the active site. Substrate-binding residues include N75, H81, and D88. H101 serves as the catalytic Proton donor. Residues 102–103 (LS) and R112 contribute to the substrate site.

This sequence belongs to the type-II 3-dehydroquinase family. In terms of assembly, homododecamer.

The catalysed reaction is 3-dehydroquinate = 3-dehydroshikimate + H2O. It functions in the pathway metabolic intermediate biosynthesis; chorismate biosynthesis; chorismate from D-erythrose 4-phosphate and phosphoenolpyruvate: step 3/7. Functionally, catalyzes a trans-dehydration via an enolate intermediate. The sequence is that of 3-dehydroquinate dehydratase from Shewanella denitrificans (strain OS217 / ATCC BAA-1090 / DSM 15013).